A 1941-amino-acid chain; its full sequence is MMDMSELGESACYLRQGYQEMMKVHTVPWDGKKRVWVPDEQDAYVEAEVKTEATGGKVTVETKDQKVLTVRETEMQPMNPPRFDLLEDMAMMTHLNEAAVLHNLRQRYARWMIYTYSGLFCVTINPYKWLPVYTAAVVAAYKGKRRSEAPPHIYAVADNAYNDMLRNRENQSMLITGESGAGKTVNTKRVIQYFAIVAALGDGPGKKAQFLATKTGGTLEDQIIEANPAMEAFGNAKTLRNDNSSRFGKFIRIHFGPTGKLASADIDSYLLEKSRVIFQLPGERGYHVYYQILSGKKPELQDMLLLSMNPYDYHFCSQGVTTVDNMDDGEELIATDHAMDILGFSVDEKCACYKIVGALLHFGNMKFKQKQREEQAEADGTESADKAAYLMGVSSGDLLKGLLHPRVRVGNEYVTKGQSVEQVVFAVGALAKATYDRLFRWLVSRINQTLDTKLPRQFFIGVLDIAGFEIFEFNSFEQLCINFTNEKLQQFFNQHMFVLEQEEYKREGIDWVFIDFGLDLQPCIDLIEKPLGILSILEEECMFPKASDASFRAKLYDNHSGKSPNFQQPRPDKKRKYQAHFEVVHYAGVVPYSIVGWLEKNKDPLNETVVPIFQKSQNRLLATLYENYAGSCSTEPPKSGVKEKRKKAASFQTVSQLHKENLNKLMTNLRATQPHFVRCIVPNENKTPGVMDSFLVLHQLRCNGVLEGIRICRQGFPNRLLYADFRQRYRILNPSAIPDDTFVDSRKATEKLLGSLDIDHTQYQFGHTKVFFKAGLLGILEELRDQRLAKVLTLLQARSRGRLMRLEYQRMLGGRDALFTIQWNIRAFNAVKNWSWMKLFFKMKPLLRSAQAEEELAALRAELRGLRGALATAEAKRQELEETQVSVTQEKNDLALQLQAEQDNLADAEERCHLLIKSKVQLEAKVKELSERLEDEEEVNADLAARRRKLEDECTELKKDIDDLELTLAKAEKEKQATENKVKNLTEEMAALDEAVVRLTKEKKALQEAHQQALGDLQAEEDRVSALAKAKIRLEQQVEDLECSLEQEKKLRMDTERAKRKLEGDLKLTQETVTDTTQDKQQLEEKLKKKDSELSQLNLRVEDEQLVGVQLQKKIKELQARAEELEEELEAERAARARVEKQRAEAARELEELSERLEEAGGASAGQREGCRKREAELGRLRRELEEAVLRHEATVAALRRKQADSAAELSEQVDSLQRIRQKLEKEKSELRMEVDDLGASVETLARGKASAEKLCRTYEDQLSEAKIKVEELQRQLADASTQRGRLQTENGELGRLLEEKESMISQLSRGKTSAAQSLEELRRQLEEESKAKGALAHAVQALRHDCDLLREQHEEESEAQAELQRLLSKANAEVAQWRSKYEADAIQRTEELEEAKKKLALRLQEAEEGVEAANAKCSSLEKAKLRLQTESEDVTLELERATSAAAALDKKQRHLERALEERRRQEEEMQRELEAAQREARGLGTELFRLRHSHEEALEALETLKRENKNLQEEISDLTDQVSLSGKSIQELEKAKKALEGEKSELQAALEEAEGALELEETKTLRIQLELSQVKAEVDRKLAEKDEECTNLRRNHQRAVESLQASLDAETRARNEALRLKKKMEGDLNDLELQLGHATRQAMEAQAATRLLQAQLKEEQAGRDEEQRLAAELREQGQALERRAALLAAELEELRAALEQGERSRRLAEQELLEATERLNLLHSQNTGLLNQKKKLEVDLAQLSGEVEEAAQERREAEEKAKKAITDAAMMAEELKKEQDTSAHLERMKKTLEQTVRELQARLEEAEQAALRGGKKQVQKLEAKVRELEAELDAEQKKHAEALKGVRKHERRVKELVYQTEEDRKNLARMQDLVDKLQSKVKSYKRQFEEAEQQASTNLAKYRKAQHELDDAEERADMAETQANKLRARSRDALGPKHKE.

Positions 30–80 constitute a Myosin N-terminal SH3-like domain; the sequence is DGKKRVWVPDEQDAYVEAEVKTEATGGKVTVETKDQKVLTVRETEMQPMNP. The Myosin motor domain occupies 84 to 785; the sequence is DLLEDMAMMT…LLGILEELRD (702 aa). 177–184 lines the ATP pocket; the sequence is GESGAGKT. 2 actin-binding regions span residues 662 to 684 and 764 to 778; these read LNKL…VPNE and QFGH…GLLG. The region spanning 788–817 is the IQ domain; that stretch reads LAKVLTLLQARSRGRLMRLEYQRMLGGRDA. A coiled-coil region spans residues 846–1935; sequence LLRSAQAEEE…KLRARSRDAL (1090 aa). Residues 1887–1941 form a disordered region; that stretch reads RQFEEAEQQASTNLAKYRKAQHELDDAEERADMAETQANKLRARSRDALGPKHKE. Positions 1930–1941 are enriched in basic and acidic residues; sequence RSRDALGPKHKE.

Belongs to the TRAFAC class myosin-kinesin ATPase superfamily. Myosin family. Muscle myosin is a hexameric protein that consists of 2 heavy chain subunits (MHC), 2 alkali light chain subunits (MLC) and 2 regulatory light chain subunits (MLC-2).

It is found in the membrane. Functionally, involved in muscle contraction. This is Myosin-7B (Myh7b) from Mus musculus (Mouse).